Reading from the N-terminus, the 987-residue chain is Pentatricopeptide repeat-containing protein At1g06710, mitochondrial (987 aa).

The transit peptide at 1 to 42 (MNKTVVRCLLSRSHHPLIHFSTNLSLLHRVFTCSRYLTARFM) directs the protein to the mitochondrion. 22 PPR repeats span residues 164-198 (TAPV…DKEV), 199-233 (FGEF…RFRP), 234-268 (SRST…NLRM), 269-299 (DGFT…ENFV), 301-335 (DTVF…SCLP), 336-370 (NVVT…GCYP), 371-405 (SPKI…GHMP), 406-446 (GYVV…GVVL), 447-481 (NKIN…GFIP), 482-516 (DTST…GLVA), 517-551 (DVYT…GCTP), 552-586 (NVVT…GCLP), 587-621 (NIVT…KDVP), 638-672 (NVVT…GCEP), 673-707 (NQIV…GFPA), 708-742 (TLYT…SCAP), 743-777 (NVVI…GCQP), 778-812 (NVVT…GVAP), 813-847 (NYVT…HWPT), 881-915 (FLSV…SATL), 918-952 (YSST…GVIP), and 953-987 (EMQS…VCPL).

Belongs to the PPR family. P subfamily.

It localises to the mitochondrion. The sequence is that of Pentatricopeptide repeat-containing protein At1g06710, mitochondrial from Arabidopsis thaliana (Mouse-ear cress).